A 388-amino-acid polypeptide reads, in one-letter code: MKKTKFFLLGLAALAMTACNKDNEAEPVVETNATVSFIIKSGESRAVGDDLTDAKITKLTAMVYAGQVQEGIKTVEEDGGVLKVEGIPCKSGANRVLVVVANHNYELTGKSLNEVEALTTSLTAENQNAKNLIMTGKSAAFTIKPGSNHYGYPGGTASDNLVSAGTPLAVTRVHAGISFAGVEVNMATQYQNYYSFKPADAKIAALVAKKDSKIFGNSLVSNTNAYLYGVQTPAGLYTPDAAGETYELEASLNTNYAVGAGFYVLESKYDASNELRPTILCIYGKLLDKDGNPLTEPALTDAINAGFCDGDGTTYYPVLVNYDGNGYIYSGAITQGQNKIVRNNHYKISLNITGPGTNTPENPQPVQANLNVTCQVTPWVVVNQAATW.

A signal peptide spans 1-18; that stretch reads MKKTKFFLLGLAALAMTA. Residue C19 is the site of N-palmitoyl cysteine attachment. Residue C19 is the site of S-diacylglycerol cysteine attachment. Residues 19 to 45 constitute a propeptide that is removed on maturation; it reads CNKDNEAEPVVETNATVSFIIKSGESR. Positions 379–388 are important for oligomerization and fimbrium assembly; that stretch reads WVVVNQAATW.

It belongs to the bacteroidetes fimbrillin superfamily. FimA/Mfa1 family. In terms of assembly, fimbriae are composed of a major, structural subunit (FimA) and the minor components FimC, FimD and FimE. Head-to-tail oligomerization of FimA molecules mediates assembly of the fimbrium stalk, while the minor components probably form the fimbrium tip. Linear, head-to-tail oligomerization of FimA is mediated by a conformation change, facilitating the insertion of a C-terminal beta-strand into a groove in the N-terminal domain of the following subunit. The anchoring subunit FimB limits fimbrium length and is important for solid fimbrium attachment to the outer membrane. In its absence, the major fimbriae become very long and are easily detached from the membrane. Synthesized as palmitoylated precursor. Efficient export to the outer membrane and integration into fimbriae requires lipidation and subsequent proteolytic removal of the lipidated propeptide.

Its subcellular location is the fimbrium. The protein resides in the cell outer membrane. Its function is as follows. Structural subunit of the major fimbriae. These long, filamentous pili are attached to the cell surface; they mediate biofilm formation, adhesion onto host cells and onto other bacteria that are part of the oral microbiome. They play an important role in the invasion of periodontal tissues. Fimbriae and their constituents are major virulence factors. FimA proteins from different strains have highly divergent sequences, and this has been used for classification. The sequence-based classification correlates with pathogenicity. The protein is Major fimbrium subunit FimA type-4 (fimA) of Porphyromonas gingivalis (strain ATCC BAA-308 / W83).